Here is a 512-residue protein sequence, read N- to C-terminus: Serine/threonine-protein kinase SSN3 (512 aa).

Disordered stretches follow at residues 1-22 (MNNH…DRPW) and 75-94 (AEVS…TGSM). The 350-residue stretch at 106-455 (YKVVGFISSG…AAAALQHPFF (350 aa)) folds into the Protein kinase domain. ATP is bound by residues 112 to 120 (ISSGTYGRV) and lysine 136. Aspartate 238 acts as the Proton acceptor in catalysis. Disordered stretches follow at residues 368–388 (QPPI…RQAA) and 476–512 (RRVS…VKEG). Positions 373–382 (HGGHHGHHYQ) are enriched in basic residues. Composition is skewed to basic and acidic residues over residues 476–485 (RRVSQDDNDI) and 497–512 (GLPD…VKEG).

It belongs to the protein kinase superfamily. CMGC Ser/Thr protein kinase family. CDC2/CDKX subfamily. Component of the SRB8-11 complex, a regulatory module of the Mediator complex. It depends on Mg(2+) as a cofactor.

It localises to the nucleus. The catalysed reaction is L-seryl-[protein] + ATP = O-phospho-L-seryl-[protein] + ADP + H(+). It carries out the reaction L-threonyl-[protein] + ATP = O-phospho-L-threonyl-[protein] + ADP + H(+). It catalyses the reaction [DNA-directed RNA polymerase] + ATP = phospho-[DNA-directed RNA polymerase] + ADP + H(+). Functionally, component of the SRB8-11 complex. The SRB8-11 complex is a regulatory module of the Mediator complex which is itself involved in regulation of basal and activated RNA polymerase II-dependent transcription. The SRB8-11 complex may be involved in the transcriptional repression of a subset of genes regulated by Mediator. It may inhibit the association of the Mediator complex with RNA polymerase II to form the holoenzyme complex. The SRB8-11 complex phosphorylates the C-terminal domain (CTD) of the largest subunit of RNA polymerase II. This chain is Serine/threonine-protein kinase SSN3 (SSN3), found in Chaetomium globosum (strain ATCC 6205 / CBS 148.51 / DSM 1962 / NBRC 6347 / NRRL 1970) (Soil fungus).